Here is a 156-residue protein sequence, read N- to C-terminus: Small ribosomal subunit protein uS7 (156 aa).

The protein belongs to the universal ribosomal protein uS7 family. Part of the 30S ribosomal subunit. Contacts proteins S9 and S11.

Functionally, one of the primary rRNA binding proteins, it binds directly to 16S rRNA where it nucleates assembly of the head domain of the 30S subunit. Is located at the subunit interface close to the decoding center, probably blocks exit of the E-site tRNA. In Ralstonia nicotianae (strain ATCC BAA-1114 / GMI1000) (Ralstonia solanacearum), this protein is Small ribosomal subunit protein uS7.